The following is a 217-amino-acid chain: ATP phosphoribosyltransferase (217 aa).

Belongs to the ATP phosphoribosyltransferase family. Short subfamily. In terms of assembly, heteromultimer composed of HisG and HisZ subunits.

The protein resides in the cytoplasm. It catalyses the reaction 1-(5-phospho-beta-D-ribosyl)-ATP + diphosphate = 5-phospho-alpha-D-ribose 1-diphosphate + ATP. The protein operates within amino-acid biosynthesis; L-histidine biosynthesis; L-histidine from 5-phospho-alpha-D-ribose 1-diphosphate: step 1/9. In terms of biological role, catalyzes the condensation of ATP and 5-phosphoribose 1-diphosphate to form N'-(5'-phosphoribosyl)-ATP (PR-ATP). Has a crucial role in the pathway because the rate of histidine biosynthesis seems to be controlled primarily by regulation of HisG enzymatic activity. The sequence is that of ATP phosphoribosyltransferase from Burkholderia lata (strain ATCC 17760 / DSM 23089 / LMG 22485 / NCIMB 9086 / R18194 / 383).